A 901-amino-acid polypeptide reads, in one-letter code: Schlafen family member 11 (901 aa).

Residues E209 and E214 each coordinate Mg(2+). K216 is a catalytic residue. The Zn(2+) site is built by H285, C287, C321, and C322. Residue 599 to 606 (GLPGSGKT) coordinates ATP.

It belongs to the Schlafen family. Subgroup III subfamily. As to quaternary structure, homodimer. Interacts with MCM3. Interacts with DHX9. Interacts with RPA1. Mg(2+) serves as cofactor. Exhibits a wider expression range in ovarian and colon adenocarcinoma than in their corresponding healthy tissues.

The protein resides in the nucleus. It is found in the chromosome. Its function is as follows. Inhibitor of DNA replication that promotes cell death in response to DNA damage. Acts as a guardian of the genome by killing cells with defective replication. Persistently blocks stressed replication forks by opening chromatin across replication initiation sites at stressed replication forks, possibly leading to unwind DNA ahead of the MCM helicase and block fork progression, ultimately leading to cell death. Upon DNA damage, inhibits translation of ATR or ATM based on distinct codon usage without disrupting early DNA damage response signaling. Antiviral restriction factor with manganese-dependent type II tRNA endoribonuclease. A single tRNA molecule is bound and cleaved by the SLFN11 dimer. Specifically abrogates the production of retroviruses such as human immunodeficiency virus 1 (HIV-1) by acting as a specific inhibitor of the synthesis of retroviruses encoded proteins in a codon-usage-dependent manner. Impairs the replication of human cytomegalovirus (HCMV) and some Flaviviruses. Exploits the unique viral codon bias towards A/T nucleotides. Also acts as an interferon (IFN)-induced antiviral protein which acts as an inhibitor of retrovirus protein synthesis. The sequence is that of Schlafen family member 11 from Homo sapiens (Human).